The chain runs to 381 residues: Prostatic acid phosphatase (381 aa).

A signal peptide spans 1–31 (MRAVPLPLSRTASLSLGFLLLLSLCLDPGQA). R42 is a binding site for substrate. Catalysis depends on H43, which acts as the Nucleophile. Residue R46 coordinates substrate. An N-linked (GlcNAc...) asparagine glycan is attached at N93. Residue R110 participates in substrate binding. Cystine bridges form between C160–C371, C214–C312, and C346–C350. An N-linked (GlcNAc...) asparagine glycan is attached at N219. H288 is a binding site for substrate. The active-site Proton donor is the D289. N332 carries N-linked (GlcNAc...) asparagine glycosylation.

This sequence belongs to the histidine acid phosphatase family. Homodimer; dimer formation is required for phosphatase activity. As to expression, expressed in salivary gland, thymus and thyroid gland. Widely expressed in prostate lobes, brain, kidney, liver, lung, muscle, placenta, salivary gland, spleen, thyroid and thymus. Locates to Schwann cells and fibroblasts. Expressed in peptidergic and non-peptidergic nociceptive (pain-sensing) neurons. Preferentially expressed in non-peptidergic doral root ganglia neurons.

It is found in the secreted. The protein localises to the cell membrane. It localises to the lysosome membrane. The enzyme catalyses a phosphate monoester + H2O = an alcohol + phosphate. It carries out the reaction a ribonucleoside 5'-phosphate + H2O = a ribonucleoside + phosphate. The catalysed reaction is 1-(9Z-octadecenoyl)-sn-glycero-3-phosphate + H2O = 1-(9Z-octadecenoyl)-sn-glycerol + phosphate. It catalyses the reaction O-phospho-L-tyrosyl-[protein] + H2O = L-tyrosyl-[protein] + phosphate. Its function is as follows. A non-specific tyrosine phosphatase that dephosphorylates a diverse number of substrates under acidic conditions (pH 4-6) including alkyl, aryl, and acyl orthophosphate monoesters and phosphorylated proteins. Has lipid phosphatase activity and inactivates lysophosphatidic acid in seminal plasma. Functionally, in addition to its tyrosine phosphatase activity, also has ecto-5'-nucleotidase activity in dorsal root ganglion (DRG) neurons. Generates adenosine from AMP. This extracellular adenosine leads to a decrease in chronic pain by activating A1R in nociceptive neurons. The sequence is that of Prostatic acid phosphatase (Acp3) from Mus musculus (Mouse).